A 321-amino-acid polypeptide reads, in one-letter code: Lipoyl synthase (321 aa).

Residues cysteine 68, cysteine 73, cysteine 79, cysteine 94, cysteine 98, cysteine 101, and serine 308 each contribute to the [4Fe-4S] cluster site. A Radical SAM core domain is found at 80-297; that stretch reads FNHGTATFMI…KALADELGFT (218 aa).

It belongs to the radical SAM superfamily. Lipoyl synthase family. [4Fe-4S] cluster is required as a cofactor.

The protein resides in the cytoplasm. It catalyses the reaction [[Fe-S] cluster scaffold protein carrying a second [4Fe-4S](2+) cluster] + N(6)-octanoyl-L-lysyl-[protein] + 2 oxidized [2Fe-2S]-[ferredoxin] + 2 S-adenosyl-L-methionine + 4 H(+) = [[Fe-S] cluster scaffold protein] + N(6)-[(R)-dihydrolipoyl]-L-lysyl-[protein] + 4 Fe(3+) + 2 hydrogen sulfide + 2 5'-deoxyadenosine + 2 L-methionine + 2 reduced [2Fe-2S]-[ferredoxin]. The protein operates within protein modification; protein lipoylation via endogenous pathway; protein N(6)-(lipoyl)lysine from octanoyl-[acyl-carrier-protein]: step 2/2. In terms of biological role, catalyzes the radical-mediated insertion of two sulfur atoms into the C-6 and C-8 positions of the octanoyl moiety bound to the lipoyl domains of lipoate-dependent enzymes, thereby converting the octanoylated domains into lipoylated derivatives. The chain is Lipoyl synthase from Shewanella baltica (strain OS223).